Reading from the N-terminus, the 671-residue chain is MKSEITNVDVCCVVDELQNLINGRLDKAFLIDNEQNRELILKIHVPEGGSRELVISIGKYKYITLTNYEREKPKLPPSFAMLLRKYLKNAKLIKIEQVNFDRVVIFHFETRDGIYKLVAELFGDGNIIFLNNEDTIIAPLRVERWSTRNIVPKEKYKFPPQKPLNPYNLEFSIAYEVFKDYFLNNKGVECVRLISRVFGIGGLYAEEICERAEIDKKKRDLSEEEIKKLFEASKNLFDEIFNNRKPQIVLKDNEYFDVVPIDLKKYKGLEKKYYNSFLEAVDDYFAKFLTKVVVKKEKSKIEKEIERQENILRRQLETLKKYKEDAEKNQIKGDLIYANYQIVEELLNAIRQAREKMDWARIKKIIRENKEHPILGLIENINENIGEIIIRLKSEVDDKVIEERVSLDIRKNAFENAESYYEKAKKLRNKIEGIENAIELTKKKIEELKKKGEEELKEKESMQMKKKIRKERKWYEKFKWTVINGFLVIAGKDAITNEIIIKKYTDKDDIVFHADIQGAPFTVIKTQGKEVDEETLEEVAKFSVSHSRAWKLGYGAIDTYWVKPEQISKTAESGEYLKRGAFVIRGERHYYRNTPLELGVGVIEYDGDVKITTAPPKTLQKSFIKWVLLKPSNKEKGKVVKELKEIFKDYGIDDEDILRVLPPGGCEIVKK.

Coiled-coil stretches lie at residues 291-363 (KVVV…ARIK) and 410-465 (RKNA…MQMK).

The protein belongs to the NEMF family. As to quaternary structure, associates with stalled 50S ribosomal subunits.

Probably part of the ribosome quality control system (RQC). May mediate the addition of alanine residues (Ala tailing) to incompletely synthesized nascent chains from stalled ribosomes, leading to their degradation. In Methanocaldococcus jannaschii (strain ATCC 43067 / DSM 2661 / JAL-1 / JCM 10045 / NBRC 100440) (Methanococcus jannaschii), this protein is Archaeal Rqc2 homolog aRqcH.